Reading from the N-terminus, the 60-residue chain is MDPCECSKTGSCNCGGSCKCSNCACTSCKKSCCPCCPSDCSKCASGCVCKGKTCDTSCCQ.

The beta stretch occupies residues methionine 1–cysteine 28. Cysteine 4, cysteine 6, cysteine 12, cysteine 14, cysteine 18, cysteine 20, cysteine 23, cysteine 25, cysteine 28, cysteine 32, cysteine 33, cysteine 35, cysteine 36, cysteine 40, cysteine 43, cysteine 47, cysteine 49, cysteine 54, cysteine 58, and cysteine 59 together coordinate a divalent metal cation. The interval lysine 29–glutamine 60 is alpha.

This sequence belongs to the metallothionein superfamily. Type 1 family.

Metallothioneins have a high content of cysteine residues that bind various heavy metals. The chain is Metallothionein B (mtb) from Oncorhynchus mykiss (Rainbow trout).